We begin with the raw amino-acid sequence, 344 residues long: GTPase Obg (344 aa).

Positions 1-159 (MKFLDLCKVY…RTLWLRLKLI (159 aa)) constitute an Obg domain. Positions 126-146 (GNLHFKSSTNQAPRRSNPGQD) are disordered. A compositionally biased stretch (polar residues) spans 130 to 144 (FKSSTNQAPRRSNPG). Residues 160–327 (ADVGLLGLPN…VLRKLRGEIS (168 aa)) form the OBG-type G domain. Residues 166–173 (GLPNAGKS), 191–195 (FTTLH), 212–215 (DIPG), 279–282 (NKID), and 308–310 (SGV) contribute to the GTP site. Mg(2+) contacts are provided by serine 173 and threonine 193.

This sequence belongs to the TRAFAC class OBG-HflX-like GTPase superfamily. OBG GTPase family. As to quaternary structure, monomer. It depends on Mg(2+) as a cofactor.

It is found in the cytoplasm. Its function is as follows. An essential GTPase which binds GTP, GDP and possibly (p)ppGpp with moderate affinity, with high nucleotide exchange rates and a fairly low GTP hydrolysis rate. Plays a role in control of the cell cycle, stress response, ribosome biogenesis and in those bacteria that undergo differentiation, in morphogenesis control. This Roseobacter denitrificans (strain ATCC 33942 / OCh 114) (Erythrobacter sp. (strain OCh 114)) protein is GTPase Obg.